Reading from the N-terminus, the 498-residue chain is Galactose-1-phosphate uridylyltransferase (498 aa).

Belongs to the galactose-1-phosphate uridylyltransferase type 2 family.

Its subcellular location is the cytoplasm. The enzyme catalyses alpha-D-galactose 1-phosphate + UDP-alpha-D-glucose = alpha-D-glucose 1-phosphate + UDP-alpha-D-galactose. It participates in carbohydrate metabolism; galactose metabolism. The sequence is that of Galactose-1-phosphate uridylyltransferase from Latilactobacillus sakei subsp. sakei (strain 23K) (Lactobacillus sakei subsp. sakei).